Consider the following 630-residue polypeptide: MESVALHRRGNLAPSASALATESARPLADRLIKSPKPLMKKQAVKRHHHKHNLRHRYEFLETLGKGTYGKVKKARESSGRLVAIKSIRKDKIKDEQDLLHIRREIEIMSSLNHPHIIAIHEVFENSSKIVIVMEYASRGDLYDYISERPRLNERDARHFFRQIVSALHYCHQNGIVHRDLKLENILLDASGNIKIADFGLSNLYHKGKFLQTFCGSPLYASPEIVNGKPYVGPEVDSWSLGVLLYILVHGTMPFDGQDHKTLVKQISSGAYREPCKPSDACGLIRWLLMVNPIRRATLEDVASHWWVNWGYSTRIGEQEALREGGHPSGDSGRASMADWLRRSSRPLLENGAKVCSFFKQHVPGGGSTGPGLERQHSLKKSRKENDMAQTLQNDPAEDTSSRPGKNSLKLPKGILKKKASPSSGEVQEGPQELRPVSNTPGQPVPAIPLLPRKGILKKSRQRESGYYSSPEPSESGELLDAGDVFVSGDPMEQKSPQASGRLHRKGILKLNGKFSRTALEGTAPSTFGSLDQLASPHPTARASRPSGAVSEDSILSSESFDQLDLPERLPETPLRGCVSVDNLRRLEQPPSEGLKRWWQESLGDSCFSLTDCQEVTAAYRQALGICSKLS.

M1 bears the N-acetylmethionine mark. Residues 57-307 enclose the Protein kinase domain; sequence YEFLETLGKG…LEDVASHWWV (251 aa). Residues 63–71 and K85 each bind ATP; that span reads LGKGTYGKV. The active-site Proton acceptor is D179. T212 carries the post-translational modification Phosphothreonine. Disordered regions lie at residues 361–504 and 521–566; these read HVPG…RLHR and GTAP…LDLP. Positions 464-476 are enriched in low complexity; that stretch reads SGYYSSPEPSESG. Phosphoserine occurs at positions 529, 550, 553, and 579.

Belongs to the protein kinase superfamily. CAMK Ser/Thr protein kinase family. SNF1 subfamily. It depends on Mg(2+) as a cofactor. Post-translationally, phosphorylated at Thr-212 by STK11/LKB1 in complex with STE20-related adapter-alpha (STRADA) pseudo kinase and CAB39. Autophosphorylation is also possible at Thr-212. In terms of tissue distribution, expressed in liver, skin, testis, uterus, ovary, adrenal gland and brain (at protein level). Expressed in kidney, heart, skin, spleen, lung, uterus, liver and the exocrine and endocrine compartments of the human pancreas. A kinase-inactive isoform also appears to be expressed in the skin, spleen, lung, uterus, liver and testis.

The enzyme catalyses L-seryl-[protein] + ATP = O-phospho-L-seryl-[protein] + ADP + H(+). It catalyses the reaction L-threonyl-[protein] + ATP = O-phospho-L-threonyl-[protein] + ADP + H(+). With respect to regulation, activated by phosphorylation on Thr-212 by STK11 in complex with STE20-related adapter-alpha (STRAD alpha) pseudo kinase and CAB39. Functionally, stress-activated kinase involved in tolerance to glucose starvation. Induces cell-cell detachment by increasing F-actin conversion to G-actin. Expression is induced by CD95 or TNF-alpha, via NF-kappa-B. Protects cells from CD95-mediated apoptosis and is required for the increased motility and invasiveness of CD95-activated tumor cells. Phosphorylates LATS1 and LATS2. Plays a key role in neural tube closure during embryonic development through LATS2 phosphorylation and regulation of the nuclear localization of YAP1 a critical downstream regulatory target in the Hippo signaling pathway. The sequence is that of NUAK family SNF1-like kinase 2 from Rattus norvegicus (Rat).